A 334-amino-acid polypeptide reads, in one-letter code: Formamidase (334 aa).

Residues 14–260 (FLVAAIQFPV…WEIVTGEIYP (247 aa)) enclose the CN hydrolase domain. Glutamate 60 serves as the catalytic Proton acceptor. The Proton donor role is filled by lysine 133. Residue cysteine 166 is the Nucleophile of the active site.

The protein belongs to the carbon-nitrogen hydrolase superfamily. Aliphatic amidase family.

It catalyses the reaction formamide + H2O = formate + NH4(+). Functionally, is an aliphatic amidase with a restricted substrate specificity, as it only hydrolyzes formamide. This Helicobacter pylori (strain HPAG1) protein is Formamidase.